The following is an 842-amino-acid chain: Xyloglucanase Xgh74A (842 aa).

The signal sequence occupies residues 1 to 32 (MVKKFTSKIKAAVFAAVVAATAIFGPAISSQA). Catalysis depends on D70, which acts as the Nucleophile. BNR repeat units follow at residues 134–144 (RSTDRGETWEK), 185–196 (WRSTDYGVTWSK), 252–262 (YRSTDGGVTWK), and 358–368 (FRSTDGGATWK). Residue D480 is the Proton donor of the active site. BNR repeat units lie at residues 533–541 (FSYDGGRNW), 577–586 (VTTDNGNSWK), 616–626 (YISTDGGLTFT), 660–671 (WRSTDGGYTFEK), and 708–718 (FRSDDAGKTWV). Positions 771 to 841 (DKGLVGDLNG…LLQAIPELPK (71 aa)) constitute a Dockerin domain.

The protein belongs to the glycosyl hydrolase 74 family.

Its function is as follows. Hydrolyzes the glucosidic bonds of unbranched Glc residues in tamarind seed xyloglucan, producing XXXG, XLXG, XXLG and XLLG. Has low activity on carboxymethylcellulose, lichenan,hydroxyethylcellulose and glucuronoxylan, and no activity on xylan, polygalaturonic acid, wheat arabinoxylan, rhamnogalacturan, curdlan, laminarin, galactomannan, galactan, arabinan and pachyman or amorphous cellulose. The chain is Xyloglucanase Xgh74A from Acetivibrio thermocellus (Hungateiclostridium thermocellum).